Here is a 580-residue protein sequence, read N- to C-terminus: MKVLLHCQRLRFIWLAKPAGRHFHRDSQLWAPLTLDDFEAINRCEKPLPKNFNFAADVLDQWSLKEKSGERPANPALWWVNGKGDEVKWSFQELGSLSRKAANVLTKPCGLQRGDRVAVILPRIPEWWLINVACMRTGLVFMPGTIQLTRKDILYRLQASKAKCIVASEEVAPAVDSIVSECPSLKTKLLVSPHHWDGWLNFQELLQSASEEHNCVETGSQEPMAIYFTSGTTGSPKMAQHSQGSLGIGYTLCGRYWLDLTSSDIMWNMSDTGWIKAAIGSVFSTWLRGACVFVHRMAQFDTDIFLDTLTTYPITTLCSAPTVYRMLVQKDLKRYQFKRLRHCLTGGEPLNPEVLEQWKMQTGLELYEGYGQTEVGIICANRKGEAIKPGSMGKGVVPYDVQIIDENGNILPSGKEGEIALRLKSDRPFCFFSEYVDNPEKTDATIRRNFYVTGDRGVMDDDGYFWFVGRADDVIISSGYRIGPFEVESALIEHPAVVESAVVSSPDPIRGEVVKAFIVLAAPYKCSNREKLTAELQDHVKNSTAPYKYPRKVEFVQELPKTITGKIKRNVLRDQEWGRA.

The N-terminal 22 residues, 1-22 (MKVLLHCQRLRFIWLAKPAGRH), are a transit peptide targeting the mitochondrion. ATP-binding positions include 229 to 237 (TSGTTGSPK), 368 to 373 (EGYGQT), aspartate 455, arginine 470, and lysine 566.

This sequence belongs to the ATP-dependent AMP-binding enzyme family. Requires Mg(2+) as cofactor. Mn(2+) serves as cofactor.

Its subcellular location is the mitochondrion. The catalysed reaction is a medium-chain fatty acid + ATP + CoA = a medium-chain fatty acyl-CoA + AMP + diphosphate. The enzyme catalyses hexanoate + ATP + CoA = hexanoyl-CoA + AMP + diphosphate. It catalyses the reaction octanoate + ATP + CoA = octanoyl-CoA + AMP + diphosphate. It carries out the reaction decanoate + ATP + CoA = decanoyl-CoA + AMP + diphosphate. The catalysed reaction is dodecanoate + ATP + CoA = dodecanoyl-CoA + AMP + diphosphate. In terms of biological role, catalyzes the activation of fatty acids by CoA to produce an acyl-CoA, the first step in fatty acid metabolism. Capable of activating medium-chain fatty acids with a preference for C6-12 fatty acids. This is Acyl-coenzyme A synthetase ACSM4, mitochondrial (Acsm4) from Mus musculus (Mouse).